The primary structure comprises 304 residues: Glycine--tRNA ligase alpha subunit (304 aa).

This sequence belongs to the class-II aminoacyl-tRNA synthetase family. Tetramer of two alpha and two beta subunits.

The protein resides in the cytoplasm. The catalysed reaction is tRNA(Gly) + glycine + ATP = glycyl-tRNA(Gly) + AMP + diphosphate. This Afipia carboxidovorans (strain ATCC 49405 / DSM 1227 / KCTC 32145 / OM5) (Oligotropha carboxidovorans) protein is Glycine--tRNA ligase alpha subunit.